Here is a 93-residue protein sequence, read N- to C-terminus: UPF0367 protein ssl1972 (93 aa).

It belongs to the UPF0367 family.

The protein is UPF0367 protein ssl1972 of Synechocystis sp. (strain ATCC 27184 / PCC 6803 / Kazusa).